Here is a 252-residue protein sequence, read N- to C-terminus: Trans-aconitate 2-methyltransferase (252 aa).

Belongs to the methyltransferase superfamily. Tam family.

Its subcellular location is the cytoplasm. The catalysed reaction is trans-aconitate + S-adenosyl-L-methionine = (E)-3-(methoxycarbonyl)pent-2-enedioate + S-adenosyl-L-homocysteine. In terms of biological role, catalyzes the S-adenosylmethionine monomethyl esterification of trans-aconitate. This chain is Trans-aconitate 2-methyltransferase, found in Escherichia coli O6:K15:H31 (strain 536 / UPEC).